The sequence spans 420 residues: Putative epoxide hydrolase (420 aa).

This sequence belongs to the peptidase S33 family.

Its pathway is mycotoxin biosynthesis. Functionally, putative epoxide hydrolase; part of the fragmented gene cluster that mediates the biosynthesis of dothistromin (DOTH), a polyketide toxin very similar in structure to the aflatoxin precursor, versicolorin B. The first step of the pathway is the conversion of acetate to norsolorinic acid (NOR) and requires the fatty acid synthase subunits hexA and hexB, as well as the polyketide synthase pksA. PksA combines a hexanoyl starter unit and 7 malonyl-CoA extender units to synthesize the precursor NOR. The hexanoyl starter unit is provided to the acyl-carrier protein (ACP) domain by the fungal fatty acid synthase hexA/hexB. The second step is the conversion of NOR to averantin (AVN) and requires the norsolorinic acid ketoreductase nor1, which catalyzes the dehydration of norsolorinic acid to form (1'S)-averantin. The cytochrome P450 monooxygenase avnA then catalyzes the hydroxylation of AVN to 5'hydroxyaverantin (HAVN). The next step is performed by adhA that transforms HAVN to averufin (AVF). Averufin might then be converted to hydroxyversicolorone by cypX and avfA. Hydroxyversicolorone is further converted versiconal hemiacetal acetate (VHA) by moxY. VHA is then the substrate for the versiconal hemiacetal acetate esterase est1 to yield versiconal (VAL). Versicolorin B synthase vbsA then converts VAL to versicolorin B (VERB) by closing the bisfuran ring. Then, the activity of the versicolorin B desaturase verB leads to versicolorin A (VERA). DotB, a predicted chloroperoxidase, may perform epoxidation of the A-ring of VERA. Alternatively, a cytochrome P450, such as cypX or avnA could catalyze this step. It is also possible that another, uncharacterized, cytochrome P450 enzyme is responsible for this step. Opening of the epoxide could potentially be achieved by the epoxide hydrolase epoA. However, epoA seems not to be required for DOTH biosynthesis, but other epoxide hydrolases may have the ability to complement this hydrolysis. Alternatively, opening of the epoxide ring could be achieved non-enzymatically. The next step is the deoxygenation of ring A to yield the 5,8-dihydroxyanthraquinone which is most likely catalyzed by the NADPH dehydrogenase encoded by ver1. The last stages of DOTH biosynthesis are proposed to involve hydroxylation of the bisfuran. OrdB and norB might have oxidative roles here. An alternative possibility is that cytochrome P450 monoogenases such as avnA and cypX might perform these steps in addition to previously proposed steps. In Dothistroma septosporum (Red band needle blight fungus), this protein is Putative epoxide hydrolase.